The following is a 47-amino-acid chain: Large ribosomal subunit protein bL27c-2 (47 aa).

It belongs to the bacterial ribosomal protein bL27 family.

The protein localises to the plastid. It localises to the chloroplast. This chain is Large ribosomal subunit protein bL27c-2, found in Cyanidium caldarium (Red alga).